Consider the following 144-residue polypeptide: Endoribonuclease YbeY (144 aa).

The Zn(2+) site is built by His-108, His-112, and His-118.

It belongs to the endoribonuclease YbeY family. The cofactor is Zn(2+).

The protein localises to the cytoplasm. Functionally, single strand-specific metallo-endoribonuclease involved in late-stage 70S ribosome quality control and in maturation of the 3' terminus of the 16S rRNA. This Phytoplasma australiense protein is Endoribonuclease YbeY.